The chain runs to 198 residues: Na(+)-translocating NADH-quinone reductase subunit E (198 aa).

6 consecutive transmembrane segments (helical) span residues 11–31, 39–59, 77–97, 110–130, 140–160, and 176–196; these read SIFI…FLAV, FGLG…NNLV, FLNF…LEMI, GIFL…SFMV, IVYG…LAGI, and LGIT…FSGV.

The protein belongs to the NqrDE/RnfAE family. Composed of six subunits; NqrA, NqrB, NqrC, NqrD, NqrE and NqrF.

The protein resides in the cell inner membrane. It catalyses the reaction a ubiquinone + n Na(+)(in) + NADH + H(+) = a ubiquinol + n Na(+)(out) + NAD(+). In terms of biological role, NQR complex catalyzes the reduction of ubiquinone-1 to ubiquinol by two successive reactions, coupled with the transport of Na(+) ions from the cytoplasm to the periplasm. NqrA to NqrE are probably involved in the second step, the conversion of ubisemiquinone to ubiquinol. The sequence is that of Na(+)-translocating NADH-quinone reductase subunit E from Photobacterium profundum (strain SS9).